Here is a 609-residue protein sequence, read N- to C-terminus: N-acetyltransferase ESCO2 (609 aa).

Disordered regions lie at residues 1–71 (MLSR…RVSP), 100–165 (EAKS…TDQV), 197–241 (KKPT…SPVR), and 314–357 (PDHD…LTAT). Composition is skewed to polar residues over residues 13 to 22 (AESNPSKKQI) and 41 to 54 (ISLN…STPK). Residues 126 to 135 (PAKKVQKKPR) are compositionally biased toward basic residues. A compositionally biased stretch (basic and acidic residues) spans 214 to 230 (PTYEKPSIRKPVREKEL). The span at 345 to 355 (PLNSSTPSALT) shows a compositional bias: polar residues. The CCHH-type zinc-finger motif lies at 392–416 (TTCASCGMLYSTDSPEDNFQHTQFH).

Belongs to the acetyltransferase family. ECO subfamily.

It localises to the nucleus. It is found in the chromosome. The enzyme catalyses L-lysyl-[protein] + acetyl-CoA = N(6)-acetyl-L-lysyl-[protein] + CoA + H(+). In terms of biological role, acetyltransferase required for the establishment of sister chromatid cohesion. Couples the processes of cohesion and DNA replication to ensure that only sister chromatids become paired together. Essential for early development. This is N-acetyltransferase ESCO2 (esco2) from Danio rerio (Zebrafish).